We begin with the raw amino-acid sequence, 316 residues long: Pantothenate kinase (316 aa).

ATP is bound at residue 95–102 (GSVAVGKS).

The protein belongs to the prokaryotic pantothenate kinase family.

It localises to the cytoplasm. The catalysed reaction is (R)-pantothenate + ATP = (R)-4'-phosphopantothenate + ADP + H(+). Its pathway is cofactor biosynthesis; coenzyme A biosynthesis; CoA from (R)-pantothenate: step 1/5. This Yersinia enterocolitica serotype O:8 / biotype 1B (strain NCTC 13174 / 8081) protein is Pantothenate kinase.